Consider the following 843-residue polypeptide: Protein P (843 aa).

Positions 1 to 177 (MPLSYQHFRK…FCGSPYSWEQ (177 aa)) are terminal protein domain (TP). The tract at residues 178–346 (DLQHGRLVFQ…YCLCHIVNLI (169 aa)) is spacer. Disordered regions lie at residues 220 to 258 (KSRLGPQPPQGQLAGRPQGGSGSIRARVHPSPWGTVGVE) and 292 to 319 (SKGHSSSGRAVELHHFPPNSSRSQSQGS). The segment covering 308-319 (PPNSSRSQSQGS) has biased composition (low complexity). The interval 347–690 (DDWGPCAEHG…YLNLYPVARQ (344 aa)) is polymerase/reverse transcriptase domain (RT). The region spanning 357-600 (EHRIRTPRTP…YSLNFMGYVI (244 aa)) is the Reverse transcriptase domain. Mg(2+) is bound by residues aspartate 429, aspartate 551, and aspartate 552.

Belongs to the hepadnaviridae P protein family.

The catalysed reaction is DNA(n) + a 2'-deoxyribonucleoside 5'-triphosphate = DNA(n+1) + diphosphate. It catalyses the reaction Endonucleolytic cleavage to 5'-phosphomonoester.. Its activity is regulated as follows. Activated by host HSP70 and HSP40 in vitro to be able to bind the epsilon loop of the pgRNA. Because deletion of the RNase H region renders the protein partly chaperone-independent, the chaperones may be needed indirectly to relieve occlusion of the RNA-binding site by this domain. Inhibited by several reverse-transcriptase inhibitors: Lamivudine, Adefovir and Entecavir. Functionally, multifunctional enzyme that converts the viral RNA genome into dsDNA in viral cytoplasmic capsids. This enzyme displays a DNA polymerase activity that can copy either DNA or RNA templates, and a ribonuclease H (RNase H) activity that cleaves the RNA strand of RNA-DNA heteroduplexes in a partially processive 3'- to 5'-endonucleasic mode. Neo-synthesized pregenomic RNA (pgRNA) are encapsidated together with the P protein, and reverse-transcribed inside the nucleocapsid. Initiation of reverse-transcription occurs first by binding the epsilon loop on the pgRNA genome, and is initiated by protein priming, thereby the 5'-end of (-)DNA is covalently linked to P protein. Partial (+)DNA is synthesized from the (-)DNA template and generates the relaxed circular DNA (RC-DNA) genome. After budding and infection, the RC-DNA migrates in the nucleus, and is converted into a plasmid-like covalently closed circular DNA (cccDNA). The activity of P protein does not seem to be necessary for cccDNA generation, and is presumably released from (+)DNA by host nuclear DNA repair machinery. This is Protein P from Hepatitis B virus genotype B1 (isolate Japan/Yamagata-2/1998) (HBV-B).